The primary structure comprises 125 residues: MIYRLKKNIEFIIVYRRGKSFANKTLVLYVLKNKRNKDKDGIAYSKVGISVSKKVGNSVVRSKCKRLLSESFRLNYNNILKGYDCVFVARNPIRDSNYFETEKAMKNLIKKAGLYYDEENGIKSN.

It belongs to the RnpA family. Consists of a catalytic RNA component (M1 or rnpB) and a protein subunit.

It catalyses the reaction Endonucleolytic cleavage of RNA, removing 5'-extranucleotides from tRNA precursor.. In terms of biological role, RNaseP catalyzes the removal of the 5'-leader sequence from pre-tRNA to produce the mature 5'-terminus. It can also cleave other RNA substrates such as 4.5S RNA. The protein component plays an auxiliary but essential role in vivo by binding to the 5'-leader sequence and broadening the substrate specificity of the ribozyme. The sequence is that of Ribonuclease P protein component from Clostridium botulinum (strain Eklund 17B / Type B).